The following is a 77-amino-acid chain: MVKLRLKRCGRKQPVYRIVAIDVRSRREGRDLRKVGFYDPINNQTYLNIPAILFFLEKGAQPTGTVYDILKKAGVSF.

This sequence belongs to the bacterial ribosomal protein bS16 family.

The protein resides in the plastid. Its subcellular location is the chloroplast. The protein is Small ribosomal subunit protein bS16c of Eucalyptus globulus subsp. globulus (Tasmanian blue gum).